A 338-amino-acid polypeptide reads, in one-letter code: Ribosomal RNA small subunit methyltransferase H (338 aa).

S-adenosyl-L-methionine is bound by residues 46-48 (GGY), aspartate 63, phenylalanine 90, aspartate 106, and glutamine 113.

This sequence belongs to the methyltransferase superfamily. RsmH family.

It is found in the cytoplasm. The catalysed reaction is cytidine(1402) in 16S rRNA + S-adenosyl-L-methionine = N(4)-methylcytidine(1402) in 16S rRNA + S-adenosyl-L-homocysteine + H(+). Specifically methylates the N4 position of cytidine in position 1402 (C1402) of 16S rRNA. The polypeptide is Ribosomal RNA small subunit methyltransferase H (Mesorhizobium japonicum (strain LMG 29417 / CECT 9101 / MAFF 303099) (Mesorhizobium loti (strain MAFF 303099))).